A 226-amino-acid chain; its full sequence is EEF1A lysine methyltransferase 1 (226 aa).

At S2 the chain carries N-acetylserine. S2 carries the post-translational modification Phosphoserine.

The protein belongs to the class I-like SAM-binding methyltransferase superfamily. EFM5 family.

Its subcellular location is the cytoplasm. It catalyses the reaction L-lysyl-[protein] + 3 S-adenosyl-L-methionine = N(6),N(6),N(6)-trimethyl-L-lysyl-[protein] + 3 S-adenosyl-L-homocysteine + 3 H(+). Functionally, protein-lysine methyltransferase that selectively catalyzes the trimethylation of EEF1A at 'Lys-79'. This chain is EEF1A lysine methyltransferase 1, found in Bos taurus (Bovine).